Here is a 170-residue protein sequence, read N- to C-terminus: Dual-action ribosomal maturation protein DarP (170 aa).

It belongs to the DarP family.

It is found in the cytoplasm. In terms of biological role, member of a network of 50S ribosomal subunit biogenesis factors which assembles along the 30S-50S interface, preventing incorrect 23S rRNA structures from forming. Promotes peptidyl transferase center (PTC) maturation. This Neisseria meningitidis serogroup A / serotype 4A (strain DSM 15465 / Z2491) protein is Dual-action ribosomal maturation protein DarP.